The chain runs to 354 residues: uncharacterized protein (354 aa).

The ABC transporter domain maps to valine 48–glycine 285. Glycine 87–threonine 94 is a binding site for ATP.

Belongs to the ABC transporter superfamily.

This is an uncharacterized protein from Synechocystis sp. (strain ATCC 27184 / PCC 6803 / Kazusa).